The sequence spans 591 residues: Solute carrier family 40 member 2, chloroplastic (591 aa).

The N-terminal 66 residues, 1–66, are a transit peptide targeting the chloroplast; that stretch reads MGMVTATAAA…RCYITNVEVD (66 aa). The next 11 helical transmembrane spans lie at 159–179, 206–226, 242–262, 293–313, 318–338, 391–411, 419–439, 452–472, 482–502, 518–540, and 547–569; these read WPAA…VGFF, GLNA…IYAM, WFIA…ALGV, LVCE…YHPV, IACG…QLIN, VATV…MTAL, PSIV…ATFI, AGAA…VVYW, LLIF…YDVV, LIGG…MAII, and FGFL…CQWL.

It belongs to the ferroportin (FP) (TC 2.A.100) family. SLC40A subfamily.

It localises to the membrane. It is found in the plastid. The protein localises to the chloroplast envelope. Its function is as follows. May be involved in iron transport and iron homeostasis. The chain is Solute carrier family 40 member 2, chloroplastic from Oryza sativa subsp. japonica (Rice).